The sequence spans 155 residues: 6,7-dimethyl-8-ribityllumazine synthase (155 aa).

5-amino-6-(D-ribitylamino)uracil contacts are provided by residues phenylalanine 23, 57–59 (AYE), and 81–83 (AVI). 86 to 87 (AT) serves as a coordination point for (2S)-2-hydroxy-3-oxobutyl phosphate. Histidine 89 serves as the catalytic Proton donor. Residue phenylalanine 114 coordinates 5-amino-6-(D-ribitylamino)uracil. Residue arginine 128 participates in (2S)-2-hydroxy-3-oxobutyl phosphate binding.

It belongs to the DMRL synthase family.

It catalyses the reaction (2S)-2-hydroxy-3-oxobutyl phosphate + 5-amino-6-(D-ribitylamino)uracil = 6,7-dimethyl-8-(1-D-ribityl)lumazine + phosphate + 2 H2O + H(+). It functions in the pathway cofactor biosynthesis; riboflavin biosynthesis; riboflavin from 2-hydroxy-3-oxobutyl phosphate and 5-amino-6-(D-ribitylamino)uracil: step 1/2. Functionally, catalyzes the formation of 6,7-dimethyl-8-ribityllumazine by condensation of 5-amino-6-(D-ribitylamino)uracil with 3,4-dihydroxy-2-butanone 4-phosphate. This is the penultimate step in the biosynthesis of riboflavin. The polypeptide is 6,7-dimethyl-8-ribityllumazine synthase (Desulfotalea psychrophila (strain LSv54 / DSM 12343)).